Reading from the N-terminus, the 217-residue chain is MRQKYYIEAAARGLVGSCPGQARYLLWAYSSTHEDNSTFQETCPHCFQLLVLDNSRVRLKPKAKLTPKIQKLLNREARNDTLSFKEAKLLRKYKDSTSVLLITCRTCNRTVRHHGKSRSFLWALKSNAATAANKASPKTPKRTAPGSANLGQSTNGSKGKSPSLTIRTPTSGQSTPICSSRNGSKRKKHFSQLKALLSQSASDKNPKLDFRHFLSSL.

S126 is modified (phosphoserine). Phosphothreonine occurs at positions 130 and 139. Positions 131-190 (AANKASPKTPKRTAPGSANLGQSTNGSKGKSPSLTIRTPTSGQSTPICSSRNGSKRKKHF) are disordered. Residues 149–182 (NLGQSTNGSKGKSPSLTIRTPTSGQSTPICSSRN) are compositionally biased toward polar residues.

Belongs to the UPF0711 family.

The sequence is that of UPF0711 protein C18orf21 homolog from Mus musculus (Mouse).